The primary structure comprises 419 residues: eIF5-mimic protein 2-A (419 aa).

The segment covering 1 to 15 has biased composition (polar residues); it reads MNNQKQQKPTLTGQR. The segment at 1 to 29 is disordered; that stretch reads MNNQKQQKPTLTGQRFKTRKRDEKERFDP. Residues 247-414 enclose the W2 domain; it reads NQQSIGARKE…KNAEEESESE (168 aa).

Belongs to the BZW family.

In terms of biological role, translation initiation regulator which may repress repeat-associated non-AUG (RAN) initiated translation probably by acting as a competitive inhibitor of eukaryotic translation initiation factor 5 (EIF5) function. Enhances histone H4 gene transcription but does not seem to bind DNA directly. The chain is eIF5-mimic protein 2-A (bzw1a) from Danio rerio (Zebrafish).